A 244-amino-acid chain; its full sequence is Gas vesicle protein F (244 aa).

It belongs to the gas vesicle GvpF/GvpL family. As to quaternary structure, binds GvpA.

The protein resides in the gas vesicle. Functionally, a minor component of the gas vesicle, may be involved in preventing GvpA aggregation during gas vesicle nucleation. Gas vesicles (GV) are hollow, gas filled proteinaceous nanostructures. During planktonic growth they allow positioning of the organism at a favorable depth for light or nutrient acquisition. Its function is as follows. Cluster expression in E.coli (gvpA1-gvpA2-gvpC-gvpN-gvpJ-gvpK-gvpF-gvpG-gvpV-gvpW) allows cells to float and produces irregularly shaped gas vesicles. The protein is Gas vesicle protein F of Nostoc sp. (strain PCC 7120 / SAG 25.82 / UTEX 2576).